A 268-amino-acid chain; its full sequence is Ribosomal RNA small subunit methyltransferase A (268 aa).

The S-adenosyl-L-methionine site is built by N16, L18, G43, E64, D89, and N110.

The protein belongs to the class I-like SAM-binding methyltransferase superfamily. rRNA adenine N(6)-methyltransferase family. RsmA subfamily.

Its subcellular location is the cytoplasm. The catalysed reaction is adenosine(1518)/adenosine(1519) in 16S rRNA + 4 S-adenosyl-L-methionine = N(6)-dimethyladenosine(1518)/N(6)-dimethyladenosine(1519) in 16S rRNA + 4 S-adenosyl-L-homocysteine + 4 H(+). Functionally, specifically dimethylates two adjacent adenosines (A1518 and A1519) in the loop of a conserved hairpin near the 3'-end of 16S rRNA in the 30S particle. May play a critical role in biogenesis of 30S subunits. The sequence is that of Ribosomal RNA small subunit methyltransferase A from Pseudomonas syringae pv. tomato (strain ATCC BAA-871 / DC3000).